The primary structure comprises 233 residues: Probable GTP-binding protein EngB (233 aa).

Positions 23–209 (AVPEVAFAGR…QRIVAGWLCL (187 aa)) constitute an EngB-type G domain. Residues 31–38 (GRSNAGKS), 58–62 (GRTQH), 82–85 (DLPG), 149–152 (TKAD), and 188–190 (FSS) each bind GTP. Mg(2+)-binding residues include serine 38 and threonine 60.

Belongs to the TRAFAC class TrmE-Era-EngA-EngB-Septin-like GTPase superfamily. EngB GTPase family. The cofactor is Mg(2+).

In terms of biological role, necessary for normal cell division and for the maintenance of normal septation. This Ralstonia pickettii (strain 12J) protein is Probable GTP-binding protein EngB.